The sequence spans 200 residues: Large ribosomal subunit protein uL4 (200 aa).

Positions 45–64 are disordered; the sequence is QKTRAEVSGGGIKPWRQKGT.

Belongs to the universal ribosomal protein uL4 family. As to quaternary structure, part of the 50S ribosomal subunit.

Functionally, one of the primary rRNA binding proteins, this protein initially binds near the 5'-end of the 23S rRNA. It is important during the early stages of 50S assembly. It makes multiple contacts with different domains of the 23S rRNA in the assembled 50S subunit and ribosome. In terms of biological role, forms part of the polypeptide exit tunnel. The sequence is that of Large ribosomal subunit protein uL4 from Psychrobacter cryohalolentis (strain ATCC BAA-1226 / DSM 17306 / VKM B-2378 / K5).